The primary structure comprises 556 residues: Acetyl-coenzyme A thioesterase (556 aa).

The HotDog ACOT-type 1 domain occupies 6–118 (APGEVLMSQA…FSTFVAKPVG (113 aa)). K34 is modified (N6-succinyllysine). CoA contacts are provided by residues 54-56 (TAS) and 83-85 (STS). K97 carries the N6-succinyllysine modification. Residue R145 participates in CoA binding. K160 and K229 each carry N6-succinyllysine. The HotDog ACOT-type 2 domain maps to 180-295 (MGTSVQSIEL…FLIYNAVDDQ (116 aa)). Residue 235 to 237 (KFR) participates in CoA binding. In terms of domain architecture, START spans 327–536 (GRKYVISHKK…GGWSKSIEEA (210 aa)).

As to quaternary structure, homodimer or homotetramer.

Its subcellular location is the cytoplasm. The protein localises to the cytosol. The catalysed reaction is acetyl-CoA + H2O = acetate + CoA + H(+). It catalyses the reaction butanoyl-CoA + H2O = butanoate + CoA + H(+). It carries out the reaction hexanoyl-CoA + H2O = hexanoate + CoA + H(+). It participates in lipid metabolism; fatty acid metabolism. With respect to regulation, allosterically regulated by ATP (activator) and ADP (inhibitor). Cold labile, it dissociates into inactive monomers at low temperature. Its function is as follows. Catalyzes the hydrolysis of acyl-CoAs into free fatty acids and coenzyme A (CoASH), regulating their respective intracellular levels. Preferentially hydrolyzes acetyl-CoA. The chain is Acetyl-coenzyme A thioesterase (Acot12) from Mus musculus (Mouse).